Consider the following 122-residue polypeptide: UPF0231 protein VV1_1657 (122 aa).

The protein belongs to the UPF0231 family.

This is UPF0231 protein VV1_1657 from Vibrio vulnificus (strain CMCP6).